We begin with the raw amino-acid sequence, 552 residues long: CTP synthase (552 aa).

Residues 1 to 270 are amidoligase domain; sequence MTKFVFVTGG…DGLICDKLRL (270 aa). Residue S13 participates in CTP binding. S13 is a binding site for UTP. ATP contacts are provided by residues 14-19 and D71; that span reads SLGKGI. Mg(2+) is bound by residues D71 and E144. CTP-binding positions include 151 to 153, 191 to 196, and K227; these read DIE and KTKPTQ. Residues 191–196 and K227 each bind UTP; that span reads KTKPTQ. The Glutamine amidotransferase type-1 domain maps to 295–548; that stretch reads QIAMVGKYVE…IKAAVEHQKP (254 aa). G357 lines the L-glutamine pocket. C384 acts as the Nucleophile; for glutamine hydrolysis in catalysis. Residues 385–388, E408, and R474 contribute to the L-glutamine site; that span reads LGMQ. Active-site residues include H521 and E523.

Belongs to the CTP synthase family. In terms of assembly, homotetramer.

It catalyses the reaction UTP + L-glutamine + ATP + H2O = CTP + L-glutamate + ADP + phosphate + 2 H(+). It carries out the reaction L-glutamine + H2O = L-glutamate + NH4(+). The catalysed reaction is UTP + NH4(+) + ATP = CTP + ADP + phosphate + 2 H(+). The protein operates within pyrimidine metabolism; CTP biosynthesis via de novo pathway; CTP from UDP: step 2/2. With respect to regulation, allosterically activated by GTP, when glutamine is the substrate; GTP has no effect on the reaction when ammonia is the substrate. The allosteric effector GTP functions by stabilizing the protein conformation that binds the tetrahedral intermediate(s) formed during glutamine hydrolysis. Inhibited by the product CTP, via allosteric rather than competitive inhibition. Its function is as follows. Catalyzes the ATP-dependent amination of UTP to CTP with either L-glutamine or ammonia as the source of nitrogen. Regulates intracellular CTP levels through interactions with the four ribonucleotide triphosphates. In Acidovorax ebreus (strain TPSY) (Diaphorobacter sp. (strain TPSY)), this protein is CTP synthase.